The primary structure comprises 82 residues: UPF0248 protein Mevan_1298 (82 aa).

It belongs to the UPF0248 family.

The chain is UPF0248 protein Mevan_1298 from Methanococcus vannielii (strain ATCC 35089 / DSM 1224 / JCM 13029 / OCM 148 / SB).